The chain runs to 200 residues: NADH-quinone oxidoreductase subunit C (200 aa).

It belongs to the complex I 30 kDa subunit family. In terms of assembly, NDH-1 is composed of 14 different subunits. Subunits NuoB, C, D, E, F, and G constitute the peripheral sector of the complex.

The protein localises to the cell inner membrane. It catalyses the reaction a quinone + NADH + 5 H(+)(in) = a quinol + NAD(+) + 4 H(+)(out). Its function is as follows. NDH-1 shuttles electrons from NADH, via FMN and iron-sulfur (Fe-S) centers, to quinones in the respiratory chain. The immediate electron acceptor for the enzyme in this species is believed to be ubiquinone. Couples the redox reaction to proton translocation (for every two electrons transferred, four hydrogen ions are translocated across the cytoplasmic membrane), and thus conserves the redox energy in a proton gradient. This is NADH-quinone oxidoreductase subunit C from Rhizobium leguminosarum bv. trifolii (strain WSM2304).